A 450-amino-acid polypeptide reads, in one-letter code: Alpha-2B adrenergic receptor (450 aa).

Residues 1 to 12 (MDHQDPYSVQAT) lie on the Extracellular side of the membrane. A helical membrane pass occupies residues 13–38 (AAIAAAITFLILFTIFGNALVILAVL). Residues 39-48 (TSRSLRAPQN) lie on the Cytoplasmic side of the membrane. The helical transmembrane segment at 49–69 (LFLVSLAAADILVATLIIPFS) threads the bilayer. Residues 70 to 86 (LANELLGYWYFRRTWCE) lie on the Extracellular side of the membrane. Residues cysteine 85 and cysteine 164 are joined by a disulfide bond. The helical transmembrane segment at 87–107 (VYLALDVLFCTSSIVHLCAIS) threads the bilayer. The Cytoplasmic portion of the chain corresponds to 108 to 128 (LDRYWAVSRALEYNSKRTPRR). A helical membrane pass occupies residues 129–149 (IKCIILTVWLIAAVISLPPLI). The Extracellular segment spans residues 150 to 172 (YKGDQGPQPRGRPQCKLNQEAWY). Residues 173-193 (ILASSIGSFFAPCLIMILVYL) form a helical membrane-spanning segment. Residues 194–368 (RIYLIAKRSN…RRAQLTREKR (175 aa)) are Cytoplasmic-facing. Disordered regions lie at residues 204 to 229 (RRGP…GGAL) and 241 to 329 (ASAR…PLQQ). Residues 246 to 256 (VNGHSKSTGEK) show a composition bias toward basic and acidic residues. The span at 293–311 (PEDEAEEEEEEEEEEEECE) shows a compositional bias: acidic residues. The segment covering 312–326 (PQAVPVSPASACSPP) has biased composition (low complexity). Residues 369–389 (FTFVLAVVIGVFVLCWFPFFF) traverse the membrane as a helical segment. Residues 390–405 (SYSLGAICPKHCKVPH) are Extracellular-facing. A helical membrane pass occupies residues 406–426 (GLFQFFFWIGYCNSSLNPVIY). The Cytoplasmic segment spans residues 427 to 450 (TIFNQDFRRAFRRILCRPWTQTAW). Cysteine 442 carries the S-palmitoyl cysteine lipid modification.

It belongs to the G-protein coupled receptor 1 family. Adrenergic receptor subfamily. ADRA2B sub-subfamily. As to quaternary structure, interacts with RAB26. Interacts with PPP1R9B. Interacts with GGA1, GGA2 and GGA3.

It is found in the cell membrane. In terms of biological role, alpha-2 adrenergic receptors mediate the catecholamine-induced inhibition of adenylate cyclase through the action of G proteins. The rank order of potency for agonists of this receptor is clonidine &gt; norepinephrine &gt; epinephrine = oxymetazoline &gt; dopamine &gt; p-tyramine = phenylephrine &gt; serotonin &gt; p-synephrine / p-octopamine. For antagonists, the rank order is yohimbine &gt; chlorpromazine &gt; phentolamine &gt; mianserine &gt; spiperone &gt; prazosin &gt; alprenolol &gt; propanolol &gt; pindolol. In Homo sapiens (Human), this protein is Alpha-2B adrenergic receptor (ADRA2B).